The sequence spans 435 residues: Eukaryotic translation initiation factor 3 subunit E (435 aa).

Residues 241–409 form the PCI domain; the sequence is TDMFFSPSYI…GTVIMNHPPQ (169 aa).

This sequence belongs to the eIF-3 subunit E family. In terms of assembly, component of the eukaryotic translation initiation factor 3 (eIF-3) complex.

It is found in the cytoplasm. Its function is as follows. Component of the eukaryotic translation initiation factor 3 (eIF-3) complex, which is involved in protein synthesis of a specialized repertoire of mRNAs and, together with other initiation factors, stimulates binding of mRNA and methionyl-tRNAi to the 40S ribosome. The eIF-3 complex specifically targets and initiates translation of a subset of mRNAs involved in cell proliferation. This chain is Eukaryotic translation initiation factor 3 subunit E, found in Phaeosphaeria nodorum (strain SN15 / ATCC MYA-4574 / FGSC 10173) (Glume blotch fungus).